Consider the following 215-residue polypeptide: Casparian strip membrane protein 3 (215 aa).

A disordered region spans residues 1 to 26 (MDSEKTGEAKITIQEPKAADPKGKGI). The Cytoplasmic portion of the chain corresponds to 1 to 55 (MDSEKTGEAKITIQEPKAADPKGKGIADAPPPPVVVTTAKAIQKLPRGGWKKGVA). A helical membrane pass occupies residues 56 to 76 (IFDFVVRLCAIATGLAATGIM). Residues 77-101 (GTTEQTLPFFTQFFQFHAEYNDLPT) are Extracellular-facing. A helical membrane pass occupies residues 102–122 (FMFFVFANGIASGYLILSLPF). At 123–136 (SIVCIVRPLAIVPR) the chain is on the cytoplasmic side. A helical membrane pass occupies residues 137 to 157 (LLLIIFDTVVMALTIAAASAA). At 158 to 189 (AAIVYLAHNGNSNANWNAICQQFNDFCQQTST) the chain is on the extracellular side. Residues 190–210 (AVVASFITAAMLTFLIVLSAF) traverse the membrane as a helical segment. Residues 211–215 (ALKRN) lie on the Cytoplasmic side of the membrane.

Belongs to the Casparian strip membrane proteins (CASP) family. As to quaternary structure, homodimer and heterodimers.

Its subcellular location is the cell membrane. Functionally, regulates membrane-cell wall junctions and localized cell wall deposition. Required for establishment of the Casparian strip membrane domain (CSD) and the subsequent formation of Casparian strips, a cell wall modification of the root endodermis that determines an apoplastic barrier between the intraorganismal apoplasm and the extraorganismal apoplasm and prevents lateral diffusion. The polypeptide is Casparian strip membrane protein 3 (Ricinus communis (Castor bean)).